The following is a 962-amino-acid chain: Putative RNA Helicase B962L (962 aa).

The Helicase ATP-binding domain occupies 43–229 (IPTSLADRVL…FGIGKENIIL (187 aa)). An ATP-binding site is contributed by 56-63 (SRTGSGKS). Residues 167 to 170 (DEAH) carry the DEAH box motif. A Helicase C-terminal domain is found at 253 to 459 (ACETALTIHK…TIKKNKEGVF (207 aa)). Residues 521–541 (GYFWQAAISDIATILAVVSVA) form a helical membrane-spanning segment.

Belongs to the DEAD box helicase family. DEAH subfamily.

Its subcellular location is the host membrane. The protein resides in the virion. It carries out the reaction ATP + H2O = ADP + phosphate + H(+). The polypeptide is Putative RNA Helicase B962L (African swine fever virus (isolate Tick/South Africa/Pretoriuskop Pr4/1996) (ASFV)).